A 315-amino-acid polypeptide reads, in one-letter code: Olfactory receptor 10H2 (315 aa).

Residues 1-25 (MLGLNHTSMSEFILVGFSAFPHLQL) lie on the Extracellular side of the membrane. An N-linked (GlcNAc...) asparagine glycan is attached at N5. The helical transmembrane segment at 26–46 (MLFLLFLLMYLFTLLGNLLIM) threads the bilayer. Residues 47–54 (ATVWSERS) lie on the Cytoplasmic side of the membrane. The chain crosses the membrane as a helical span at residues 55-75 (LHTPMYLFLCVLSVSEILYTV). Over 76 to 99 (AIIPRMLADLLSTQRSIAFLACAS) the chain is Extracellular. C97 and C189 are disulfide-bonded. The helical transmembrane segment at 100–120 (QMFFSFSFGFTHSFLLTVMGY) threads the bilayer. Residues 121 to 139 (DRYVAICHPLRYNVLMSPR) lie on the Cytoplasmic side of the membrane. The helical transmembrane segment at 140 to 160 (GCACLVGCSWAGGSVMGMVVT) threads the bilayer. The Extracellular segment spans residues 161-197 (SAIFQLTFCGSHEIQHFLCHVPPLLKLACGNNVPAVA). The helical transmembrane segment at 198–218 (LGVGLVCIMALLGCFLLILLS) threads the bilayer. Topologically, residues 219–238 (YAFIVADILKIPSAEGRNKA) are cytoplasmic. The helical transmembrane segment at 239 to 259 (FSTCASHLIVVIVHYGFASVI) threads the bilayer. The Extracellular portion of the chain corresponds to 260-272 (YLKPKGPHSQEGD). The chain crosses the membrane as a helical span at residues 273–293 (TLMATTYAVLTPFLSPIIFSL). Residues 294 to 315 (RNKELKVAMKRTFLSTLYSSGT) lie on the Cytoplasmic side of the membrane.

Belongs to the G-protein coupled receptor 1 family.

Its subcellular location is the cell membrane. Its function is as follows. Odorant receptor. This is Olfactory receptor 10H2 (OR10H2) from Homo sapiens (Human).